A 353-amino-acid polypeptide reads, in one-letter code: Photosystem II D2 protein (353 aa).

An N-acetylthreonine modification is found at Thr-2. Thr-2 carries the post-translational modification Phosphothreonine. Residues 41–61 (CAYFALGGWFTGTTFVTSWYT) form a helical membrane-spanning segment. His-118 is a binding site for chlorophyll a. The helical transmembrane segment at 125-141 (GFMLRQFELARSVQLRP) threads the bilayer. Pheophytin a contacts are provided by Gln-130 and Asn-143. Residues 153-166 (VFVSVFLIYPLGQS) form a helical membrane-spanning segment. Chlorophyll a is bound at residue His-198. A helical transmembrane segment spans residues 208-228 (AALLCAIHGATVENTLFEDGD). Residues His-215 and Phe-262 each contribute to the a plastoquinone site. Position 215 (His-215) interacts with Fe cation. Residue His-269 coordinates Fe cation. The helical transmembrane segment at 279-295 (GLWMSALGVVGLALNLR) threads the bilayer.

It belongs to the reaction center PufL/M/PsbA/D family. As to quaternary structure, PSII is composed of 1 copy each of membrane proteins PsbA, PsbB, PsbC, PsbD, PsbE, PsbF, PsbH, PsbI, PsbJ, PsbK, PsbL, PsbM, PsbT, PsbX, PsbY, PsbZ, Psb30/Ycf12, at least 3 peripheral proteins of the oxygen-evolving complex and a large number of cofactors. It forms dimeric complexes. It depends on The D1/D2 heterodimer binds P680, chlorophylls that are the primary electron donor of PSII, and subsequent electron acceptors. It shares a non-heme iron and each subunit binds pheophytin, quinone, additional chlorophylls, carotenoids and lipids. There is also a Cl(-1) ion associated with D1 and D2, which is required for oxygen evolution. The PSII complex binds additional chlorophylls, carotenoids and specific lipids. as a cofactor.

It localises to the plastid. Its subcellular location is the chloroplast thylakoid membrane. It catalyses the reaction 2 a plastoquinone + 4 hnu + 2 H2O = 2 a plastoquinol + O2. Its function is as follows. Photosystem II (PSII) is a light-driven water:plastoquinone oxidoreductase that uses light energy to abstract electrons from H(2)O, generating O(2) and a proton gradient subsequently used for ATP formation. It consists of a core antenna complex that captures photons, and an electron transfer chain that converts photonic excitation into a charge separation. The D1/D2 (PsbA/PsbD) reaction center heterodimer binds P680, the primary electron donor of PSII as well as several subsequent electron acceptors. D2 is needed for assembly of a stable PSII complex. This chain is Photosystem II D2 protein, found in Amborella trichopoda.